Here is a 118-residue protein sequence, read N- to C-terminus: Large ribosomal subunit protein eL18 (118 aa).

It belongs to the eukaryotic ribosomal protein eL18 family.

This chain is Large ribosomal subunit protein eL18, found in Nanoarchaeum equitans (strain Kin4-M).